Reading from the N-terminus, the 173-residue chain is Mediator of RNA polymerase II transcription subunit 19 (173 aa).

Positions 139 to 173 are disordered; that stretch reads LMRGDDMSENDEFGARRSKRKKKAQNGTDSKRQHI.

The protein belongs to the Mediator complex subunit 19 family. In terms of assembly, component of the Mediator complex.

Its subcellular location is the nucleus. Its function is as follows. Component of the Mediator complex, a coactivator involved in the regulated transcription of nearly all RNA polymerase II-dependent genes. Mediator functions as a bridge to convey information from gene-specific regulatory proteins to the basal RNA polymerase II transcription machinery. Mediator is recruited to promoters by direct interactions with regulatory proteins and serves as a scaffold for the assembly of a functional preinitiation complex with RNA polymerase II and the general transcription factors. This chain is Mediator of RNA polymerase II transcription subunit 19 (ROX3), found in Scheffersomyces stipitis (strain ATCC 58785 / CBS 6054 / NBRC 10063 / NRRL Y-11545) (Yeast).